The primary structure comprises 41 residues: Photosystem II reaction center protein L (41 aa).

A helical transmembrane segment spans residues 20–40; sequence SLYLGLLLVFVVGILFSSYFF.

This sequence belongs to the PsbL family. As to quaternary structure, PSII is composed of 1 copy each of membrane proteins PsbA, PsbB, PsbC, PsbD, PsbE, PsbF, PsbH, PsbI, PsbJ, PsbK, PsbL, PsbM, PsbT, PsbX, PsbY, PsbZ, Psb30/Ycf12, peripheral proteins PsbO, CyanoQ (PsbQ), PsbU, PsbV and a large number of cofactors. It forms dimeric complexes.

The protein localises to the cellular thylakoid membrane. One of the components of the core complex of photosystem II (PSII). PSII is a light-driven water:plastoquinone oxidoreductase that uses light energy to abstract electrons from H(2)O, generating O(2) and a proton gradient subsequently used for ATP formation. It consists of a core antenna complex that captures photons, and an electron transfer chain that converts photonic excitation into a charge separation. This subunit is found at the monomer-monomer interface and is required for correct PSII assembly and/or dimerization. This Trichodesmium erythraeum (strain IMS101) protein is Photosystem II reaction center protein L.